Consider the following 57-residue polypeptide: Large ribosomal subunit protein bL32c (57 aa).

The protein belongs to the bacterial ribosomal protein bL32 family.

It is found in the plastid. Its subcellular location is the chloroplast. In Vitis vinifera (Grape), this protein is Large ribosomal subunit protein bL32c.